The following is a 217-amino-acid chain: Cytidylate kinase (217 aa).

An ATP-binding site is contributed by 9–17 (GPAGAGKST).

It belongs to the cytidylate kinase family. Type 1 subfamily.

It is found in the cytoplasm. It carries out the reaction CMP + ATP = CDP + ADP. The catalysed reaction is dCMP + ATP = dCDP + ADP. This Clostridium acetobutylicum (strain ATCC 824 / DSM 792 / JCM 1419 / IAM 19013 / LMG 5710 / NBRC 13948 / NRRL B-527 / VKM B-1787 / 2291 / W) protein is Cytidylate kinase.